Consider the following 195-residue polypeptide: UPF0301 protein CCNA_03506 (195 aa).

The protein belongs to the UPF0301 (AlgH) family.

This Caulobacter vibrioides (strain NA1000 / CB15N) (Caulobacter crescentus) protein is UPF0301 protein CCNA_03506.